The chain runs to 412 residues: Class E basic helix-loop-helix protein 40 (412 aa).

Residues 1 to 21 are disordered; sequence MERIPSAQPPPTCLPKAPGLE. The segment at 1–139 is essential for interaction with BMAL1, E-box binding and repressor activity against the CLOCK-BMAL1 heterodimer; that stretch reads MERIPSAQPP…LSGRNVEAGQ (139 aa). One can recognise a bHLH domain in the interval 52 to 107; sequence TYKLPHRLIEKKRRDRINECIAQLKDLLPEHLKLTTLGHLEKAVVLELTLKHVKAL. The interval 75–79 is necessary for interaction with RXRA and repressor activity against RXRA; that stretch reads LKDLL. An Orange domain is found at 142–175; it reads FCSGFQTCAREVLQYLAKHENTRDLKSSQLVTHL. Residue lysine 159 forms a Glycyl lysine isopeptide (Lys-Gly) (interchain with G-Cter in SUMO1, SUMO2 and SUMO3) linkage. Residue lysine 167 forms a Glycyl lysine isopeptide (Lys-Gly) (interchain with G-Cter in SUMO2) linkage. Disordered stretches follow at residues 182-256 and 279-298; these read LLQG…ELRV and KQES…SDDE. Serine 235 carries the phosphoserine modification. A Glycyl lysine isopeptide (Lys-Gly) (interchain with G-Cter in SUMO1); alternate cross-link involves residue lysine 279. Lysine 279 participates in a covalent cross-link: Glycyl lysine isopeptide (Lys-Gly) (interchain with G-Cter in SUMO1, SUMO2 and SUMO3); alternate. Lysine 279 is covalently cross-linked (Glycyl lysine isopeptide (Lys-Gly) (interchain with G-Cter in SUMO2); alternate). A Glycyl lysine isopeptide (Lys-Gly) (interchain with G-Cter in SUMO2) cross-link involves residue lysine 288. The residue at position 383 (serine 383) is a Phosphoserine.

As to quaternary structure, homodimer. Heterodimer with BHLHE41/DEC2. Interacts with TCF3/E47. Interacts with ubiquitin-conjugating enzyme UBE2I/UBC9. Interacts with HDAC1, SUMO1, RXRA and BMAL1. Post-translationally, ubiquitinated; which may lead to proteasomal degradation. In terms of processing, sumoylation inhibits its ubiquitination and promotes its negative regulation of the CLOCK-BMAL1 heterodimer transcriptional activator activity.

The protein resides in the cytoplasm. It is found in the nucleus. Its function is as follows. Transcriptional repressor involved in the regulation of the circadian rhythm by negatively regulating the activity of the clock genes and clock-controlled genes. Acts as the negative limb of a novel autoregulatory feedback loop (DEC loop) which differs from the one formed by the PER and CRY transcriptional repressors (PER/CRY loop). Both these loops are interlocked as it represses the expression of PER1/2 and in turn is repressed by PER1/2 and CRY1/2. Represses the activity of the circadian transcriptional activator: CLOCK-BMAL1|BMAL2 heterodimer by competing for the binding to E-box elements (5'-CACGTG-3') found within the promoters of its target genes. Negatively regulates its own expression and the expression of DBP and BHLHE41/DEC2. Acts as a corepressor of RXR and the RXR-LXR heterodimers and represses the ligand-induced RXRA and NR1H3/LXRA transactivation activity. May be involved in the regulation of chondrocyte differentiation via the cAMP pathway. Represses the transcription of NR0B2 and attentuates the transactivation of NR0B2 by the CLOCK-BMAL1 complex. Drives the circadian rhythm of blood pressure through transcriptional repression of ATP1B1 in the cardiovascular system. This Bos taurus (Bovine) protein is Class E basic helix-loop-helix protein 40 (BHLHE40).